The sequence spans 93 residues: Zinc metalloproteinase-disintegrin-like leucurogin (93 aa).

The Disintegrin domain maps to 8 to 93 (PPVCGNELLE…SECPADVGHK (86 aa)). Ca(2+)-binding residues include V10, N13, L15, E17, E20, and D23. Disulfide bonds link C11–C40, C22–C35, C24–C30, C34–C57, C48–C54, C53–C79, and C66–C86. Positions 72 to 74 (ECD) match the D/ECD-tripeptide motif. Residues D74, P75, E77, D89, and V90 each coordinate Ca(2+). The segment at 74-93 (DPAEHCTGQSSECPADVGHK) is disordered.

It belongs to the venom metalloproteinase (M12B) family. P-III subfamily. As to quaternary structure, monomer. Requires Zn(2+) as cofactor. N-glycosylated. Expressed by the venom gland.

It is found in the secreted. Snake venom zinc metalloprotease that possesses hemorrhagic activity. The disintegrin-like domain has been expressed and named leucurogin. This recombinant disintegrin is able to inhibit collagen-induced platelet aggregation but not ADP- or arachidonic acid-induced platelet aggregation. Furthermore, it inhibits the adhesion of human fibroblasts to collagen type I. It also reduces adhesion and migration of human fibroblasts and inhibits migration and proliferation of human and mouse melanoma cell lines (BLM, and B16-F10-Nex2). In vitro, it inhibits the vascular structures formation by endothelial cells. In addition, it inhibits the growth of experimental Ehrlich tumor and has anti-angiogenesis effect on the sponge implant model. In vivo, when intraperitoneally injected into mice, it inhibits lung metastasis of B16F10 Nex-2 cells. In the treatment of human melanoma, grafted intradermally in the nude mice flank, it inhibits tumor growth. The protein is Zinc metalloproteinase-disintegrin-like leucurogin of Bothrops leucurus (Whitetail lancehead).